A 662-amino-acid polypeptide reads, in one-letter code: MSHVAVENALGLDQQFAGLDLNSSDNQSGGSTASKGRYIPPHLRNREATKGFYDKDSSGWSSSKDKDAYSSFGSRSDSRGKSSFFSDRGSGSRGRFDDRGRSDYDGIGSRGDRSGFGKFERGGNSRWCDKSDEDDWSKPLPPSERLEQELFSGGNTGINFEKYDDIPVEATGNNCPPHIESFSDVEMGEIIMGNIELTRYTRPTPVQKHAIPIIKEKRDLMACAQTGSGKTAAFLLPILSQIYSDGPGEALRAMKENGRYGRRKQYPISLVLAPTRELAVQIYEEARKFSYRSRVRPCVVYGGADIGQQIRDLERGCHLLVATPGRLVDMMERGKIGLDFCKYLVLDEADRMLDMGFEPQIRRIVEQDTMPPKGVRHTMMFSATFPKEIQMLARDFLDEYIFLAVGRVGSTSENITQKVVWVEESDKRSFLLDLLNATGKDSLTLVFVETKKGADSLEDFLYHEGYACTSIHGDRSQRDREEALHQFRSGKSPILVATAVAARGLDISNVKHVINFDLPSDIEEYVHRIGRTGRVGNLGLATSFFNERNINITKDLLDLLVEAKQEVPSWLENMAYEHHYKGSSRGRSKSSRFSGGFGARDYRQSSGASSSSFSSSRASSSRSGGGGHGSSRGFGGGGYGGFYNSDGYGGNYNSQGVDWWGN.

Position 2 is an N-acetylserine (serine 2). Residues 2–139 (SHVAVENALG…KSDEDDWSKP (138 aa)) are required for TBK1 and IKBKE-dependent IFNB1 activation. Residues 12–21 (LDQQFAGLDL) carry the Nuclear export signal motif. The segment at 19-144 (LDLNSSDNQS…DWSKPLPPSE (126 aa)) is disordered. Polar residues predominate over residues 21 to 34 (LNSSDNQSGGSTAS). Residues 38–44 (YIPPHLR) are interaction with EIF4E. A compositionally biased stretch (basic and acidic residues) spans 44 to 68 (RNREATKGFYDKDSSGWSSSKDKDA). Residue lysine 55 is modified to N6-acetyllysine. Residues 70 to 89 (SSFGSRSDSRGKSSFFSDRG) show a composition bias toward low complexity. The segment at 81–90 (KSSFFSDRGS) is interaction with VACV protein K7. Residues serine 82, serine 86, and serine 90 each carry the phosphoserine modification. The interval 88-123 (RGSGSRGRFDDRGRSDYDGIGSRGDRSGFGKFERGG) is involved in binding to RNA G-quadruplex. A compositionally biased stretch (basic and acidic residues) spans 94–130 (GRFDDRGRSDYDGIGSRGDRSGFGKFERGGNSRWCDK). The tract at residues 100-110 (GRSDYDGIGSR) is interaction with IKBKE. The tract at residues 100-662 (GRSDYDGIGS…NSQGVDWWGN (563 aa)) is interaction with GSK3B. The residue at position 101 (arginine 101) is an Omega-N-methylarginine. Serine 102 carries the phosphoserine; by IKKE modification. A Phosphotyrosine modification is found at tyrosine 104. At arginine 110 the chain carries Omega-N-methylarginine. The residue at position 118 (lysine 118) is an N6-acetyllysine. The residue at position 131 (serine 131) is a Phosphoserine. The segment at 139–172 (PLPPSERLEQELFSGGNTGINFEKYDDIPVEATG) is interaction with CHUK. Positions 180 to 208 (ESFSDVEMGEIIMGNIELTRYTRPTPVQK) match the Q motif motif. Residue serine 181 is modified to Phosphoserine; by TBK1; in vitro. The residue at position 183 (serine 183) is a Phosphoserine; by TBK1. ATP is bound at residue 200–207 (YTRPTPVQ). One can recognise a Helicase ATP-binding domain in the interval 211–403 (IPIIKEKRDL…RDFLDEYIFL (193 aa)). A Glycyl lysine isopeptide (Lys-Gly) (interchain with G-Cter in SUMO2) cross-link involves residue lysine 215. Position 224-231 (224-231 (AQTGSGKT)) interacts with ATP. Position 240 is a phosphoserine; by TBK1; in vitro (serine 240). The tract at residues 250–259 (ALRAMKENGR) is involved in stimulation of ATPase activity by DNA and RNA, nucleic acid binding and unwinding and HIV-1 replication. Serine 269 is modified (phosphoserine; by TBK1; in vitro). The DEAD box motif lies at 347–350 (DEAD). Residues 409–662 (GSTSENITQK…NSQGVDWWGN (254 aa)) are interaction with HCV core protein. The Helicase C-terminal domain occupies 414–575 (NITQKVVWVE…EVPSWLENMA (162 aa)). Serine 429 carries the phosphoserine; by CSNK1E and TBK1; in vitro modification. Phosphothreonine; by TBK1; in vitro is present on threonine 438. 2 positions are modified to phosphoserine; by TBK1; in vitro: serine 442 and serine 456. Residue threonine 469 is modified to Phosphothreonine; by CSNK1E; in vitro. Serine 470 carries the phosphoserine; by CSNK1E; in vitro modification. Phosphoserine; by TBK1; in vitro is present on serine 520. Residues 536–661 (GNLGLATSFF…YNSQGVDWWG (126 aa)) form an interaction with NXF1 region. Threonine 542 is subject to Phosphothreonine; by TBK1; in vitro. A Phosphoserine; by CSNK1E and TBK1; in vitro modification is found at serine 543. Position 592 is an omega-N-methylarginine (arginine 592). Residues serine 594, serine 605, and serine 612 each carry the phosphoserine modification. The tract at residues 601–634 (DYRQSSGASSSSFSSSRASSSRSGGGGHGSSRGF) is disordered. Low complexity predominate over residues 604–622 (QSSGASSSSFSSSRASSSR). Omega-N-methylarginine occurs at positions 617 and 632. The span at 623 to 634 (SGGGGHGSSRGF) shows a compositional bias: gly residues.

It belongs to the DEAD box helicase family. DDX3/DED1 subfamily. In terms of assembly, homodimer; can bind RNA as a monomer and as a dimer/oligomer. Interacts with TDRD3. Interacts (when phosphorylated at Ser-102) with IRF3; the interaction facilitates the phosphorylation and activation of IRF3 by IKBKE. Directly interacts with XPO1/CRM1. The interaction with XPO1/CMR1 is dependent on the DDX3X nuclear export signal motif and XPO1 interaction with GTPase RAN in its active GTP-bound form. Weakly interacts with TBKBP1/SINTBAD. Directly interacts with TRAF3; this interaction stimulates TRAF3 'Lys-63' ubiquitination. Interacts with CSNK1E in a Wnt-dependent manner; this interaction greatly enhances CSNK1E affinity for ATP, stimulates its kinase activity and promotes CSNK1E-mediated DVL2 phosphorylation. In the presence of RNA, the interaction is decreased. Also interacts with CSNK1D and stimulates its kinase activity. Interacts with TRPV4; this interaction is decreased when the TRPV4 channel is activated, leading to DDX3X relocalization to the nucleus. Interacts with MAP3K14/NIK. Directly interacts with CHUK/IKKA after physiological activation of the TLR7 and TLR8 pathways; this interaction enhances CHUK autophosphorylation. May associate with EIF4F complex, composed of at least EIF4A, EIF4E and EIF4G1/EIF4G3. Directly interacts with EIF4E in an RNA-independent manner; this interaction enhances EIF4E cap-binding ability. Directly interacts with EIF4G1 in an RNA-independent manner. DDX3X competes with EIF4G1 for interaction with EIF4E. Interacts with EIF4A1 and EIF2S1 in an RNA-independent manner. Associates with the eukaryotic translation initiation factor 3 (eIF-3) complex, including with EIF3B and EIF3C subunits. Directly interacts with IKBKE/IKKE; this interaction stimulates IKBKE activating autophosphorylation and is induced upon viral infection. Interacts with TBK1. Interacts with SP1; this interaction potentiates SP1-induced CDKN1A/WAF1/CIP1 transcription. Interacts with GSK3A and GSK3B. Interacts with several death receptors, inclusing FAS, TNFRSF10A and TNFRSF10B. Recruited to TNFRSF10B in the absence of receptor stimulation. When TNFRSF10B is stimulated, further recruited to the receptor and cleaved by caspases. A large proteolytic fragment remains associated with TNFRSF10B. Interacts (via C-terminus) with NXF1/TAP; this interaction may be partly involved in DDX3X nuclear export and in NXF1 localization to stress granules. Identified in an mRNP complex, composed of at least DHX9, DDX3X, ELAVL1, HNRNPU, IGF2BP1/2, ILF3, PABPC1, PCBP2, PTBP2, STAU1, STAU2, SYNCRIP and YBX1. The interaction with IGF2BP1/2 is RNA-dependent. Directly interacts with PABPC1/PABP1 in an RNA-independent manner. This interaction increases in stressed cells and decreases during cell recovery. Interacts (via C-terminus) with MAVS/IPS-1; this interaction occurs rapidly, but transiently after Sendai virus infection. The interaction potentiates MAVS-mediated IFNB induction. Interacts with ERCC6/CBS. Interacts with DHX33 in an RNA-independent manner. Interacts with DDX5 in the cytoplasm; this interaction may be more efficient when both proteins are unphosphorylated. Interacts with RIGI/RIG-1. Interacts with IFIH1/MDA5. Interacts with NCAPH; this interaction may be important for the NCAPH localization at condensing chromosomes during mitosis. Interacts with NLRP3 (via NACHT domain) under inflammasome-activating conditions. Interacts with CAPRIN1. Interacts with HNF4A and NR0B2/SHP in an RNA-independent manner; this interaction disrupts the interaction between HNF4 and NR0B2 that forms inactive heterodimers and enhances the formation of active HNF4 homodimers. Interacts with CREBBP/CBP. Interacts with EP300/p300. Interacts with gamma-tubulin. Interacts with phosphorylated TP53. Directly interacts with RELA/p65; this interaction may trap RELA in the cytoplasm, impairing nuclear relocalization upon TNF activating signals. (Microbial infection) Interacts with hepatitis B virus (HBV) polymerase in the cytoplasm; this interaction may inhibit DDX3X interaction with the IKBKE/TBK1 complex, and hence impair IKBKE/TBK1-mediated increase in IFNB production. As to quaternary structure, (Microbial infection) Directly interacts with hepatitis C virus (HCV) core protein in the cytoplasm. In terms of assembly, (Microbial infection) Interacts with vaccinia virus (VACV) protein K7. (Microbial infection) Interacts with HIV-1 protein Rev. As to quaternary structure, (Microbial infection) Interacts with Venezuelan equine encephalitis virus non-structural protein 3. Post-translationally, phosphorylated by TBK1; the phosphorylation is required for the synergistic induction of IFNB mediated by TBK1 and DDX3X. Phosphorylated by IKBKE at Ser-102 after ssRNA viral infection; enhances the induction of INFB promoter by IRF3. The cytoplasmic form is highly phosphorylated in the G1/S phase of the cell cycle and much less at G2/M. Phosphorylation by CSNK1E may inhibit RNA-stimulated ATPase activity. In terms of processing, upon stimulation of death receptors, including TNFRSF10B, recruited to receptors and cleaved by caspases. Proteolytic fragments remain associated with the receptors. This cleavage presumably inactivates DDX3X anti-apoptotic function. Ubiquitinated by RNF39 via 'Lys-48'-linked ubiquitination; leading to proteasomal degradation. Widely expressed. In testis, expressed in spermatids. Expressed in epidermis and liver (at protein level).

It localises to the cell membrane. The protein localises to the nucleus. Its subcellular location is the cytoplasm. The protein resides in the stress granule. It is found in the inflammasome. It localises to the cell projection. The protein localises to the lamellipodium. Its subcellular location is the cytoskeleton. The protein resides in the microtubule organizing center. It is found in the centrosome. It catalyses the reaction ATP + H2O = ADP + phosphate + H(+). Its function is as follows. Multifunctional ATP-dependent RNA helicase. The ATPase activity can be stimulated by various ribo-and deoxynucleic acids indicative for a relaxed substrate specificity. In vitro can unwind partially double-stranded DNA with a preference for 5'-single-stranded DNA overhangs. Binds RNA G-quadruplex (rG4s) structures, including those located in the 5'-UTR of NRAS mRNA. Involved in many cellular processes, which do not necessarily require its ATPase/helicase catalytic activities. Involved in transcription regulation. Positively regulates CDKN1A/WAF1/CIP1 transcription in an SP1-dependent manner, hence inhibits cell growth. This function requires its ATPase, but not helicase activity. CDKN1A up-regulation may be cell-type specific. Binds CDH1/E-cadherin promoter and represses its transcription. Potentiates HNF4A-mediated MTTP transcriptional activation; this function requires ATPase, but not helicase activity. Facilitates HNF4A acetylation, possibly catalyzed by CREBBP/EP300, thereby increasing the DNA-binding affinity of HNF4 to its response element. In addition, disrupts the interaction between HNF4 and SHP that forms inactive heterodimers and enhances the formation of active HNF4 homodimers. By promoting HNF4A-induced MTTP expression, may play a role in lipid homeostasis. May positively regulate TP53 transcription. Associates with mRNPs, predominantly with spliced mRNAs carrying an exon junction complex (EJC). Involved in the regulation of translation initiation. Not involved in the general process of translation, but promotes efficient translation of selected complex mRNAs, containing highly structured 5'-untranslated regions (UTR). This function depends on helicase activity. Might facilitate translation by resolving secondary structures of 5'-UTRs during ribosome scanning. Alternatively, may act prior to 43S ribosomal scanning and promote 43S pre-initiation complex entry to mRNAs exhibiting specific RNA motifs, by performing local remodeling of transcript structures located close to the cap moiety. Independently of its ATPase activity, promotes the assembly of functional 80S ribosomes and disassembles from ribosomes prior to the translation elongation process. Positively regulates the translation of cyclin E1/CCNE1 mRNA and consequently promotes G1/S-phase transition during the cell cycle. May activate TP53 translation. Required for endoplasmic reticulum stress-induced ATF4 mRNA translation. Independently of its ATPase/helicase activity, enhances IRES-mediated translation; this activity requires interaction with EIF4E. Independently of its ATPase/helicase activity, has also been shown specifically repress cap-dependent translation, possibly by acting on translation initiation factor EIF4E. Involved in innate immunity, acting as a viral RNA sensor. Binds viral RNAs and promotes the production of type I interferon (IFN-alpha and IFN-beta). Potentiate MAVS/RIGI-mediated induction of IFNB in early stages of infection. Enhances IFNB1 expression via IRF3/IRF7 pathway and participates in NFKB activation in the presence of MAVS and TBK1. Involved in TBK1 and IKBKE-dependent IRF3 activation leading to IFNB induction, acts as a scaffolding adapter that links IKBKE and IRF3 and coordinates their activation. Involved in the TLR7/TLR8 signaling pathway leading to type I interferon induction, including IFNA4 production. In this context, acts as an upstream regulator of IRF7 activation by MAP3K14/NIK and CHUK/IKKA. Stimulates CHUK autophosphorylation and activation following physiological activation of the TLR7 and TLR8 pathways, leading to MAP3K14/CHUK-mediated activatory phosphorylation of IRF7. Also stimulates MAP3K14/CHUK-dependent NF-kappa-B signaling. Negatively regulates TNF-induced IL6 and IL8 expression, via the NF-kappa-B pathway. May act by interacting with RELA/p65 and trapping it in the cytoplasm. May also bind IFNB promoter; the function is independent of IRF3. Involved in both stress and inflammatory responses. Independently of its ATPase/helicase activity, required for efficient stress granule assembly through its interaction with EIF4E, hence promotes survival in stressed cells. Independently of its helicase activity, regulates NLRP3 inflammasome assembly through interaction with NLRP3 and hence promotes cell death by pyroptosis during inflammation. This function is independent of helicase activity. Therefore DDX3X availability may be used to interpret stress signals and choose between pro-survival stress granules and pyroptotic NLRP3 inflammasomes and serve as a live-or-die checkpoint in stressed cells. In association with GSK3A/B, negatively regulates extrinsic apoptotic signaling pathway via death domain receptors, including TNFRSF10B, slowing down the rate of CASP3 activation following death receptor stimulation. Cleavage by caspases may inactivate DDX3X and relieve the inhibition. Independently of its ATPase/helicase activity, allosteric activator of CSNK1E. Stimulates CSNK1E-mediated phosphorylation of DVL2, thereby involved in the positive regulation of Wnt/beta-catenin signaling pathway. Also activates CSNK1A1 and CSNK1D in vitro, but it is uncertain if these targets are physiologically relevant. ATPase and casein kinase-activating functions are mutually exclusive. May be involved in mitotic chromosome segregation. In terms of biological role, (Microbial infection) Facilitates hepatitis C virus (HCV) replication. During infection, HCV core protein inhibits the interaction between MAVS and DDX3X and therefore impairs MAVS-dependent INFB induction and might recruit DDX3X to HCV replication complex. Functionally, (Microbial infection) Facilitates HIV-1 replication. Acts as a cofactor for XPO1-mediated nuclear export of HIV-1 Rev RNAs. This function is strongly stimulated in the presence of TBK1 and requires DDX3X ATPase activity. (Microbial infection) Facilitates Zika virus (ZIKV) replication. Its function is as follows. (Microbial infection) Facilitates Dengue virus (DENV) replication. In terms of biological role, (Microbial infection) Facilitates Venezuelan equine encephalitis virus (VEEV) replication. In Homo sapiens (Human), this protein is ATP-dependent RNA helicase DDX3X (DDX3X).